The chain runs to 351 residues: Probable glucuronosyltransferase Os10g0205300 (351 aa).

The Cytoplasmic segment spans residues Met-1–Pro-11. A helical; Signal-anchor for type II membrane protein membrane pass occupies residues Ile-12–Phe-32. Residues Ala-33–Leu-351 lie on the Lumenal side of the membrane. A disordered region spans residues Ser-138–Asn-169. Residues Gln-156–Asn-169 are compositionally biased toward basic and acidic residues. An N-linked (GlcNAc...) asparagine glycan is attached at Asn-259.

It belongs to the glycosyltransferase 43 family.

The protein resides in the golgi apparatus membrane. Functionally, involved in the synthesis of glucuronoxylan hemicellulose in secondary cell walls. The protein is Probable glucuronosyltransferase Os10g0205300 of Oryza sativa subsp. japonica (Rice).